A 390-amino-acid polypeptide reads, in one-letter code: Nuclear receptor subfamily 2 group F member 6 (390 aa).

A compositionally biased stretch (gly residues) spans 1–15 (MAMVTGGWGDPGGDT). The segment at 1 to 50 (MAMVTGGWGDPGGDTNGVDKAGGSYPRATEDDSASPPGATSDAEPGDEER) is disordered. Phosphoserine is present on residues S35 and S41. Positions 54–129 (QVDCVVCGDK…VGMRKEAVQR (76 aa)) form a DNA-binding region, nuclear receptor. The NR C4-type zinc finger occupies 57–77 (CVVCGDKSSGKHYGVFTCEGC). Phosphoserine is present on S84. The segment at 93–117 (CRSNRDCQIDQHHRNQCQYCRLKKC) adopts an NR C4-type zinc-finger fold. In terms of domain architecture, NR LBD spans 157–380 (PVSELIAQLL…TLIRDMLLSG (224 aa)). The important for dimerization stretch occupies residues 314 to 390 (LQEKAQVALT…STFNWPYGSG (77 aa)).

Belongs to the nuclear hormone receptor family. NR2 subfamily. In terms of assembly, binds DNA as dimer; homodimer and heterodimer with NR2F2 and probably NR2F1. Interacts with THRB.

It localises to the nucleus. Its function is as follows. Transcription factor predominantly involved in transcriptional repression. Binds to promoter/enhancer response elements that contain the imperfect 5'-AGGTCA-3' direct or inverted repeats with various spacings which are also recognized by other nuclear hormone receptors. Involved in modulation of hormonal responses. Represses transcriptional activity of the lutropin-choriogonadotropic hormone receptor/LHCGR gene, the renin/REN gene and the oxytocin-neurophysin/OXT gene. Represses the triiodothyronine-dependent and -independent transcriptional activity of the thyroid hormone receptor gene in a cell type-specific manner. The corepressing function towards thyroid hormone receptor beta/THRB involves at least in part the inhibition of THRB binding to triiodothyronine response elements (TREs) by NR2F6. Inhibits NFATC transcription factor DNA binding and subsequently its transcriptional activity. Acts as transcriptional repressor of IL-17 expression in Th-17 differentiated CD4(+) T cells and may be involved in induction and/or maintenance of peripheral immunological tolerance and autoimmunity. Involved in development of forebrain circadian clock; is required early in the development of the locus coeruleus (LC). This chain is Nuclear receptor subfamily 2 group F member 6 (Nr2f6), found in Mus musculus (Mouse).